We begin with the raw amino-acid sequence, 667 residues long: Cyclin-dependent kinase 17 (667 aa).

Disordered stretches follow at residues 1–70 (MTAY…SSLN) and 85–184 (DSEY…LRKM). Acidic residues-rich tracts occupy residues 99–111 (EDFDEEEEDEFED) and 119–144 (DEDDVEYEDEDDEDDIVVEEEEITPE). A compositionally biased stretch (polar residues) spans 151-164 (TGVTTQTTPPSNNT). The 282-residue stretch at 328–609 (YEKLDKLGEG…AAEAVKHPFL (282 aa)) folds into the Protein kinase domain. Residues 334-342 (LGEGTYATV) and lysine 357 each bind ATP. Aspartate 449 (proton acceptor) is an active-site residue. Residues asparagine 454 and aspartate 467 each coordinate Mg(2+). Residues 642–667 (HHHSSRRHHRGTLVKDKYRMHSSHHT) form a disordered region. Positions 644–653 (HSSRRHHRGT) are enriched in basic residues.

The protein belongs to the protein kinase superfamily. CMGC Ser/Thr protein kinase family. CDC2/CDKX subfamily. As to quaternary structure, interacts with cyy-1; the interaction is required to activate pct-1. Mg(2+) is required as a cofactor.

It localises to the cytoplasm. The protein localises to the cell projection. It is found in the dendrite. Its subcellular location is the axon. The catalysed reaction is L-seryl-[protein] + ATP = O-phospho-L-seryl-[protein] + ADP + H(+). It carries out the reaction L-threonyl-[protein] + ATP = O-phospho-L-threonyl-[protein] + ADP + H(+). In terms of biological role, serine/threonine-protein kinase, which, in association with cyy-1, regulates the trafficking of synaptic vesicles in the DA9 motor neuron and probably also in the DD motor neurons and in RIA interneurons. Functionally, sufficient for synaptic vesicle trafficking in the DA9 motor neuron. In Caenorhabditis elegans, this protein is Cyclin-dependent kinase 17.